A 540-amino-acid polypeptide reads, in one-letter code: Telomerase Cajal body protein 1 (540 aa).

The segment covering 1–10 (MKTPEAPPLA) has biased composition (pro residues). A disordered region spans residues 1–126 (MKTPEAPPLA…GEDVEGVSEE (126 aa)). Ser-26, Ser-30, Ser-54, Ser-64, Ser-85, and Ser-90 each carry phosphoserine. Over residues 116-126 (PGEDVEGVSEE) the composition is skewed to acidic residues. WD repeat units lie at residues 158–197 (QPEN…YNEG), 213–258 (EGDT…LRAS), 263–304 (NHLD…RDCE), 314–355 (GQSG…ALLG), 356–396 (GHQG…HPLW), and 402–441 (VTTN…LESK). Residue Thr-480 is modified to Phosphothreonine. Ser-482 bears the Phosphoserine mark. The disordered stretch occupies residues 520-540 (SDAHQEEMGQGRTEGGGGEFT). Positions 531–540 (RTEGGGGEFT) are enriched in gly residues.

This sequence belongs to the TCAB1 family. As to quaternary structure, component of the telomerase holoenzyme complex composed of one molecule of TERT, one molecule of WRAP53/TCAB1, two molecules of H/ACA ribonucleoprotein complex subunits DKC1, NOP10, NHP2 and GAR1, and a telomerase RNA template component (TERC). The telomerase holoenzyme complex is associated with TEP1, SMG6/EST1A and POT1. Interacts with the chaperonin-containing T-complex (TRiC) complex; which mediates the folding of WRAP53/TCAB1. Interacts with COIL. Interacts with SMN1. Interacts with RNF8. Interacts with histone H2AX. Phosphorylated at Ser-64 by ATM in response to DNA damage, promoting its interaction with histone H2AX and localization to sites of DNA double-strand breaks.

Its subcellular location is the nucleus. The protein resides in the cajal body. The protein localises to the chromosome. It is found in the telomere. Functionally, RNA chaperone that plays a key role in telomere maintenance and RNA localization to Cajal bodies. Specifically recognizes and binds the Cajal body box (CAB box) present in both small Cajal body RNAs (scaRNAs) and telomerase RNA template component (TERC). Essential component of the telomerase holoenzyme complex, a ribonucleoprotein complex essential for the replication of chromosome termini that elongates telomeres in most eukaryotes. In the telomerase holoenzyme complex, required to stimulate the catalytic activity of the complex. Acts by specifically binding the CAB box of the TERC RNA and controlling the folding of the CR4/CR5 region of the TERC RNA, a critical step for telomerase activity. In addition, also controls telomerase holoenzyme complex localization to Cajal body. During S phase, required for delivery of TERC to telomeres during S phase and for telomerase activity. In addition to its role in telomere maintenance, also required for Cajal body formation, probably by mediating localization of scaRNAs to Cajal bodies. Also plays a role in DNA repair: phosphorylated by ATM in response to DNA damage and relocalizes to sites of DNA double-strand breaks to promote the repair of DNA double-strand breaks. Acts by recruiting the ubiquitin ligase RNF8 to DNA breaks and promote both homologous recombination (HR) and non-homologous end joining (NHEJ). In Bos taurus (Bovine), this protein is Telomerase Cajal body protein 1.